Consider the following 287-residue polypeptide: 2-dehydro-3-deoxyphosphooctonate aldolase (287 aa).

Belongs to the KdsA family.

It localises to the cytoplasm. The enzyme catalyses D-arabinose 5-phosphate + phosphoenolpyruvate + H2O = 3-deoxy-alpha-D-manno-2-octulosonate-8-phosphate + phosphate. Its pathway is carbohydrate biosynthesis; 3-deoxy-D-manno-octulosonate biosynthesis; 3-deoxy-D-manno-octulosonate from D-ribulose 5-phosphate: step 2/3. It participates in bacterial outer membrane biogenesis; lipopolysaccharide biosynthesis. This is 2-dehydro-3-deoxyphosphooctonate aldolase from Rhodopseudomonas palustris (strain TIE-1).